A 204-amino-acid polypeptide reads, in one-letter code: MRVIGLTGGIGSGKSYVAERLAERGAAVVDTDAIAHEITAPGGAAIPKLVEAFGPGILRADGAMDRDAMRALAFSDATAKARLERITHPLIREISLSRGAAAQASDACPYLVYVVPLLVESLSGHHSWRALVDRILVIDCPVETQIARVIARNGLPRALVESIVARQATREARLAVADDVIDNGGALADLLPQIDRLDLAYRAH.

Residues 3 to 204 form the DPCK domain; the sequence is VIGLTGGIGS…DRLDLAYRAH (202 aa). 11–16 serves as a coordination point for ATP; it reads GSGKSY.

The protein belongs to the CoaE family.

It localises to the cytoplasm. The enzyme catalyses 3'-dephospho-CoA + ATP = ADP + CoA + H(+). The protein operates within cofactor biosynthesis; coenzyme A biosynthesis; CoA from (R)-pantothenate: step 5/5. Functionally, catalyzes the phosphorylation of the 3'-hydroxyl group of dephosphocoenzyme A to form coenzyme A. This chain is Dephospho-CoA kinase, found in Ralstonia nicotianae (strain ATCC BAA-1114 / GMI1000) (Ralstonia solanacearum).